The sequence spans 605 residues: Tyrosyl-DNA phosphodiesterase 1 (605 aa).

The short motif at 81 to 86 is the Nuclear localization signal element; that stretch reads RKKVKP. His236 functions as the Nucleophile in the catalytic mechanism. Lys238 contributes to the substrate binding site. Residues 379 to 382 are interaction with DNA; that stretch reads SLGS. His466 serves as the catalytic Proton donor/acceptor. Position 468 (Lys468) interacts with substrate.

It belongs to the tyrosyl-DNA phosphodiesterase family. As to expression, ubiquitous, with a low level in roots.

The protein localises to the nucleus. With respect to regulation, inhibited by vanadate analogs. In terms of biological role, DNA repair enzyme that can remove a variety of covalent adducts from DNA through hydrolysis of a 3'-phosphodiester bond, giving rise to DNA with a free 3' phosphate. Catalyzes the hydrolysis of dead-end complexes between DNA and the topoisomerase I active site tyrosine residue. In Arabidopsis thaliana (Mouse-ear cress), this protein is Tyrosyl-DNA phosphodiesterase 1.